Consider the following 1259-residue polypeptide: MVRLREIPRTATFAWSPGAASPLIATGTRAGAVDVDFSNQTCLELWDLALSRHETGGELQPVAKIDTDSGFNDLAWTESEDNSRGVIAGALENGSLDLWDADKLLNGSDDAVISRTSKHSGAVKALQFNPKHSNLLATGGAKGELYISDLDNIANPYRLGGTAARADDIECLDWNKKVAHILVTGSSAGFVTVWDVKTKKESLTLNNMGRKAVSAVAWDPEKPTKLVTATPLESDPLICVWDLRNSHAPERTLRGHESGVLSLSWCAQDPDLLLSSGKDNRTMCWNPQTGHAYGEFPVVTNWTFQTRWNPHNPNFFATASFDGKISIQTIQNTSTETAQAIADQNQALDGEDFFAKAQTQPQVSSFSLPKPPKWLERPCSATFGFGGRVVSVNLVEKGQRASKIKITPFEVDEAVGKSTETFETALKEGDLRSICESRAANAGSDEEKADWKVIEALISKDPRKGLVEYLGFADQADEAADSLSKLGLDKEEEVNGEVAKESRGSGAKKHRRLQSMFDANPEADSFLSDLAASKGAKTNNPFHIFNGSENEADTGITRALLLGDFEKALDVALKEDRLSDAFMIAICGGPKCIEKAQEHYFQKQTNSPNYVRLLASIVGKNLWDVVYNADLSNWKEVMAALCTFADEKDFADLCEALGDRLEEELRNNEDKGMRKDASFCFLAGSKLEKVVAIWIEELREHEQKAIETAADDSAFSIHVRALQGLIEKVTIFRQVTKFEDTERTKESDWKLSTLYDKYIEYADVVATHGRLQVAQKYLDLVPEKHPEAEIARNRIKLATRQATPQRTQPAAATVTRAALNKPLPQPNAFQPQRAYSPATPAAVPSPYAPAAAAANAYAPPTTATNPYAPSTASAPAQPVNPYAPPAGGSSYTPAGYQPPKAPAYGAQPLGGGVPPPPRASNQSPAPTVTTYTTATNLPAWNDLPEGFAKAPTPRRSTPAAATVASPFPNQSPTLTQGPPPPAGQRAPSVPPPPKGTAPPPRMTSPPAAQPASTTMPPPPANPYASLPQSPPMASTMGVPASIPRGPSPYNAPPTMPPPPNRYAPSPAAQAASPQLQTRAPVPPPPQAAASPYAPQPPAAGHYVPSTPPPHVQPPPQQAPPPQAAPGSRPSTASSQKKPAPAPPKYPPGDRSHIPADAMPVYEILSADMQRVKSRAPSSFKAQVDDAERRLNILFDHLNNEDLLKPNTIADMAELARAIQARDYETARTIHVDIMTNRLDECGNWMVGVKRLISMSRATP.

WD repeat units lie at residues 5–47 (REIP…ELWD), 66–109 (DTDS…NGSD), 118–158 (KHSG…NPYR), 164–204 (ARAD…ESLT), 208–251 (MGRK…APER), 255–295 (GHES…AYGE), and 298–338 (VVTN…TETA). Residues 382–407 (TFGFGGRVVSVNLVEKGQRASKIKIT) form a WD 8; interaction with sec13 repeat. 2 disordered regions span residues 822 to 845 (PLPQ…AVPS) and 868 to 1154 (APST…SHIP). 3 stretches are compositionally biased toward low complexity: residues 834–845 (AYSPATPAAVPS), 924–939 (PAPT…NLPA), and 950–968 (APTP…SPFP). Pro residues predominate over residues 977–1003 (GPPPPAGQRAPSVPPPPKGTAPPPRMT). Low complexity predominate over residues 1004–1014 (SPPAAQPASTT). A compositionally biased stretch (pro residues) spans 1045–1061 (GPSPYNAPPTMPPPPNR). The segment covering 1062–1079 (YAPSPAAQAASPQLQTRA) has biased composition (low complexity). Over residues 1105–1123 (STPPPHVQPPPQQAPPPQA) the composition is skewed to pro residues. The span at 1129–1138 (PSTASSQKKP) shows a compositional bias: low complexity.

The protein belongs to the WD repeat SEC31 family. The COPII coat is composed of at least 5 proteins: the sec23/24 complex, the sec13/31 complex, and the protein sar1. sec13 and sec31 make a 2:2 tetramer that forms the edge element of the COPII outer coat. The tetramer self-assembles in multiple copies to form the complete polyhedral cage. Interacts (via WD 8) with sec13.

The protein resides in the cytoplasmic vesicle. Its subcellular location is the COPII-coated vesicle membrane. The protein localises to the endoplasmic reticulum membrane. Functionally, component of the coat protein complex II (COPII) which promotes the formation of transport vesicles from the endoplasmic reticulum (ER). The coat has two main functions, the physical deformation of the endoplasmic reticulum membrane into vesicles and the selection of cargo molecules. This is Protein transport protein sec31 (sec31) from Aspergillus niger (strain ATCC MYA-4892 / CBS 513.88 / FGSC A1513).